The primary structure comprises 86 residues: Small ribosomal subunit protein eS21 (86 aa).

Belongs to the eukaryotic ribosomal protein eS21 family. As to quaternary structure, component of the 40S small ribosomal subunit.

Its subcellular location is the cytoplasm. It is found in the cytosol. The protein localises to the rough endoplasmic reticulum. The polypeptide is Small ribosomal subunit protein eS21 (RPS21) (Suberites domuncula (Sponge)).